The primary structure comprises 121 residues: Nitrogenase-stabilizing/protective protein NifW (121 aa).

The protein belongs to the NifW family. Homotrimer; associates with NifD.

May protect the nitrogenase Fe-Mo protein from oxidative damage. This Leptothrix cholodnii (strain ATCC 51168 / LMG 8142 / SP-6) (Leptothrix discophora (strain SP-6)) protein is Nitrogenase-stabilizing/protective protein NifW.